A 366-amino-acid chain; its full sequence is Geranylgeranyl pyrophosphate synthase, chloroplastic/chromoplastic (366 aa).

Residues 44–65 (KRTVSSSSSSSLITKEDNNLKS) are disordered. Isopentenyl diphosphate contacts are provided by Lys-112, Arg-115, and His-144. Asp-151 and Asp-157 together coordinate Mg(2+). Arg-162 lines the dimethylallyl diphosphate pocket. Arg-163 provides a ligand contact to isopentenyl diphosphate. Positions 251, 252, 289, 306, and 316 each coordinate dimethylallyl diphosphate.

Belongs to the FPP/GGPP synthase family. As to quaternary structure, dimer. Mg(2+) is required as a cofactor.

Its subcellular location is the plastid. The protein localises to the chloroplast stroma. The protein resides in the chromoplast. The catalysed reaction is isopentenyl diphosphate + dimethylallyl diphosphate = (2E)-geranyl diphosphate + diphosphate. It carries out the reaction isopentenyl diphosphate + (2E)-geranyl diphosphate = (2E,6E)-farnesyl diphosphate + diphosphate. The enzyme catalyses isopentenyl diphosphate + (2E,6E)-farnesyl diphosphate = (2E,6E,10E)-geranylgeranyl diphosphate + diphosphate. It participates in isoprenoid biosynthesis; farnesyl diphosphate biosynthesis; farnesyl diphosphate from geranyl diphosphate and isopentenyl diphosphate: step 1/1. It functions in the pathway isoprenoid biosynthesis; geranyl diphosphate biosynthesis; geranyl diphosphate from dimethylallyl diphosphate and isopentenyl diphosphate: step 1/1. Its pathway is isoprenoid biosynthesis; geranylgeranyl diphosphate biosynthesis; geranylgeranyl diphosphate from farnesyl diphosphate and isopentenyl diphosphate: step 1/1. Its function is as follows. Catalyzes the trans-addition of the three molecules of IPP onto DMAPP to form geranylgeranyl pyrophosphate. The polypeptide is Geranylgeranyl pyrophosphate synthase, chloroplastic/chromoplastic (GGPS1) (Sinapis alba (White mustard)).